Here is a 245-residue protein sequence, read N- to C-terminus: 6-carboxyhexanoate--CoA ligase (245 aa).

The protein belongs to the BioW family. As to quaternary structure, homodimer. Mg(2+) serves as cofactor.

The enzyme catalyses heptanedioate + ATP + CoA = 6-carboxyhexanoyl-CoA + AMP + diphosphate. The protein operates within metabolic intermediate metabolism; pimeloyl-CoA biosynthesis; pimeloyl-CoA from pimelate: step 1/1. Catalyzes the transformation of pimelate into pimeloyl-CoA with concomitant hydrolysis of ATP to AMP. In Methanococcus vannielii (strain ATCC 35089 / DSM 1224 / JCM 13029 / OCM 148 / SB), this protein is 6-carboxyhexanoate--CoA ligase.